Consider the following 169-residue polypeptide: Putative hydrolase 111R (169 aa).

The region spanning 46 to 169 is the Nudix hydrolase domain; that stretch reads FEKRKAGVFV…QKILMALSCN (124 aa). Residues 76–98 carry the Nudix box motif; that stretch reads GHMEAYDHSPKTCAERELKEETG. Mg(2+)-binding residues include glutamate 92, glutamate 96, and aspartate 138.

Belongs to the Nudix hydrolase family. It depends on Mg(2+) as a cofactor. Mn(2+) is required as a cofactor.

The polypeptide is Putative hydrolase 111R (Aedes vexans (Inland floodwater mosquito)).